The following is a 166-amino-acid chain: Phosphodiesterase MJ0936 (166 aa).

Mn(2+) is bound by residues D8, H10, D36, N59, H97, H120, and H122. The Ni(2+) site is built by D8, H10, D36, N59, H97, H120, and H122.

Belongs to the metallophosphoesterase superfamily. YfcE family. As to quaternary structure, monomer. It depends on Ni(2+) as a cofactor. Mn(2+) serves as cofactor.

Its activity is regulated as follows. Competitively inhibited by phosphate. In terms of biological role, shows phosphodiesterase activity. Hydrolyzes phosphodiesters bonds in the artificial chromogenic substrates bis-p-nitrophenyl phosphate (bis-pNPP), and less efficiently thymidine 5'-monophosphate p-nitrophenyl ester (pNP-TMP) and p-nitrophenylphosphorylcholine (pNPPC). No catalytic activity was found toward cAMP or cGMP, nucleotides or phospholipase substrates such as phosphatidylcholine. The physiological substrate is unknown. The sequence is that of Phosphodiesterase MJ0936 from Methanocaldococcus jannaschii (strain ATCC 43067 / DSM 2661 / JAL-1 / JCM 10045 / NBRC 100440) (Methanococcus jannaschii).